A 769-amino-acid chain; its full sequence is Probable beta-glucosidase M (769 aa).

Positions 1 to 22 are cleaved as a signal peptide; the sequence is MHSNLGLAGLAGLLATASVCLS. N-linked (GlcNAc...) asparagine glycosylation is found at N28, N75, and N262. Residue D290 is part of the active site. 4 N-linked (GlcNAc...) asparagine glycosylation sites follow: N318, N325, N437, and N546.

The protein belongs to the glycosyl hydrolase 3 family.

It localises to the secreted. The catalysed reaction is Hydrolysis of terminal, non-reducing beta-D-glucosyl residues with release of beta-D-glucose.. It participates in glycan metabolism; cellulose degradation. In terms of biological role, beta-glucosidases are one of a number of cellulolytic enzymes involved in the degradation of cellulosic biomass. Catalyzes the last step releasing glucose from the inhibitory cellobiose. This Neosartorya fischeri (strain ATCC 1020 / DSM 3700 / CBS 544.65 / FGSC A1164 / JCM 1740 / NRRL 181 / WB 181) (Aspergillus fischerianus) protein is Probable beta-glucosidase M (bglM).